Here is a 329-residue protein sequence, read N- to C-terminus: Beta-ketoacyl-[acyl-carrier-protein] synthase III (329 aa).

Residues Cys123 and His256 contribute to the active site. Positions 257–261 (QANIR) are ACP-binding. The active site involves Asn286.

The protein belongs to the thiolase-like superfamily. FabH family. Homodimer.

The protein localises to the cytoplasm. It catalyses the reaction malonyl-[ACP] + acetyl-CoA + H(+) = 3-oxobutanoyl-[ACP] + CO2 + CoA. The protein operates within lipid metabolism; fatty acid biosynthesis. Its function is as follows. Catalyzes the condensation reaction of fatty acid synthesis by the addition to an acyl acceptor of two carbons from malonyl-ACP. Catalyzes the first condensation reaction which initiates fatty acid synthesis and may therefore play a role in governing the total rate of fatty acid production. Possesses both acetoacetyl-ACP synthase and acetyl transacylase activities. Its substrate specificity determines the biosynthesis of branched-chain and/or straight-chain of fatty acids. The polypeptide is Beta-ketoacyl-[acyl-carrier-protein] synthase III (Burkholderia orbicola (strain AU 1054)).